We begin with the raw amino-acid sequence, 427 residues long: Glutamate-1-semialdehyde 2,1-aminomutase (427 aa).

Position 265 is an N6-(pyridoxal phosphate)lysine (Lys265).

Belongs to the class-III pyridoxal-phosphate-dependent aminotransferase family. HemL subfamily. As to quaternary structure, homodimer. The cofactor is pyridoxal 5'-phosphate.

It localises to the cytoplasm. The enzyme catalyses (S)-4-amino-5-oxopentanoate = 5-aminolevulinate. Its pathway is porphyrin-containing compound metabolism; protoporphyrin-IX biosynthesis; 5-aminolevulinate from L-glutamyl-tRNA(Glu): step 2/2. The sequence is that of Glutamate-1-semialdehyde 2,1-aminomutase from Bordetella pertussis (strain Tohama I / ATCC BAA-589 / NCTC 13251).